Here is a 361-residue protein sequence, read N- to C-terminus: tRNA 2-selenouridine synthase (361 aa).

Residues 11–134 (LIADTPLIDV…LRQTAIQATW (124 aa)) enclose the Rhodanese domain. Cys-94 acts as the S-selanylcysteine intermediate in catalysis.

The protein belongs to the SelU family. Monomer.

It carries out the reaction 5-methylaminomethyl-2-thiouridine(34) in tRNA + selenophosphate + (2E)-geranyl diphosphate + H2O + H(+) = 5-methylaminomethyl-2-selenouridine(34) in tRNA + (2E)-thiogeraniol + phosphate + diphosphate. The catalysed reaction is 5-methylaminomethyl-2-thiouridine(34) in tRNA + (2E)-geranyl diphosphate = 5-methylaminomethyl-S-(2E)-geranyl-thiouridine(34) in tRNA + diphosphate. The enzyme catalyses 5-methylaminomethyl-S-(2E)-geranyl-thiouridine(34) in tRNA + selenophosphate + H(+) = 5-methylaminomethyl-2-(Se-phospho)selenouridine(34) in tRNA + (2E)-thiogeraniol. It catalyses the reaction 5-methylaminomethyl-2-(Se-phospho)selenouridine(34) in tRNA + H2O = 5-methylaminomethyl-2-selenouridine(34) in tRNA + phosphate. Involved in the post-transcriptional modification of the uridine at the wobble position (U34) of tRNA(Lys), tRNA(Glu) and tRNA(Gln). Catalyzes the conversion of 2-thiouridine (S2U-RNA) to 2-selenouridine (Se2U-RNA). Acts in a two-step process involving geranylation of 2-thiouridine (S2U) to S-geranyl-2-thiouridine (geS2U) and subsequent selenation of the latter derivative to 2-selenouridine (Se2U) in the tRNA chain. The chain is tRNA 2-selenouridine synthase from Salmonella arizonae (strain ATCC BAA-731 / CDC346-86 / RSK2980).